Consider the following 100-residue polypeptide: uncharacterized protein (100 aa).

Its subcellular location is the mitochondrion. This is an uncharacterized protein from Arabidopsis thaliana (Mouse-ear cress).